A 311-amino-acid polypeptide reads, in one-letter code: Phosphopantothenate--cysteine ligase (311 aa).

Ala-2 bears the N-acetylalanine mark.

This sequence belongs to the PPC synthetase family. As to quaternary structure, homodimer.

The catalysed reaction is (R)-4'-phosphopantothenate + L-cysteine + ATP = N-[(R)-4-phosphopantothenoyl]-L-cysteine + AMP + diphosphate + H(+). It carries out the reaction (R)-4'-phosphopantothenate + L-cysteine + CTP = N-[(R)-4-phosphopantothenoyl]-L-cysteine + CMP + diphosphate + H(+). It participates in cofactor biosynthesis; coenzyme A biosynthesis; CoA from (R)-pantothenate: step 2/5. Its function is as follows. Catalyzes the second step in the biosynthesis of coenzyme A from vitamin B5, where cysteine is conjugated to 4'-phosphopantothenate to form 4-phosphopantothenoylcysteine. Has a preference for ATP over CTP as a cosubstrate. The protein is Phosphopantothenate--cysteine ligase (Ppcs) of Mus musculus (Mouse).